The sequence spans 315 residues: Ankyrin repeat domain-containing protein 54 (315 aa).

The disordered stretch occupies residues 1-49 (MDGSSPLLAAAGSDGDRSSSEGEYTLAGGPSAGDTEKREGESPMEAAGA). 4 ANK repeats span residues 124 to 153 (HAVKRLREAANSNDIDTVRRLLEDDTDPCA), 157 to 186 (KGRTALHFSSCNGNETIVQLLLSYGADPNQ), 190 to 219 (LGNTPLHLAACTNHVPVITTLLRGGARVDA), and 223 to 255 (AGRTPLHLARSKLNILQEGDSRSLETLRGEVTQ).

Its subcellular location is the nucleus. It is found in the cytoplasm. It localises to the midbody. In terms of biological role, plays an important role in regulating intracellular signaling events associated with erythroid terminal differentiation. The chain is Ankyrin repeat domain-containing protein 54 (ankrd54) from Danio rerio (Zebrafish).